The sequence spans 510 residues: MLILLILYFLFLQLHIFDSFIKSIMYDIYIHYAICKFIFLLEIYKLIAMGKRKGQRNIASMKYHLYNKILNRKSFPAFSVMFDAGVESVLPTPLENIQIPLGINTNYGIAYASIISSLLSALNNLAISVFNPNFNSQTFLNLGQSANFGISNGISLLNNYTSLYDNYVQLCNILYQPAVFDETYFDLSVYQPALATEYQNQSCKKIEQYFSSLTTTNVSVNVTTLGTGITNIPNVDNYMYNNIADTGIIDLLNALNINFNQLPDFAKFIIAFIPDLNSIINNGFALDVGWLDRCVLAPETQNGIQLQNGMILQYFADVFGMILDYTPLDFAVLMPEFNPENVTQDDLIAILSADKTVISIFGNLFKMHLYDPSPGGINIAYSSEIENYAVSYQQFLQIQKIVNKKYSNIWYAKMVASATIEIARYPYQQNYSYTSGKRTLSYQDFLNYWKTKWKFYGLTDQDLQYAQQLGEQLQGQAKIENQIKLAQKSAKTKQYKPIFYYKNFQNIAVR.

The N-terminal stretch at 1–19 (MLILLILYFLFLQLHIFDS) is a signal peptide. A helical transmembrane segment spans residues 28–48 (IYIHYAICKFIFLLEIYKLIA).

The protein localises to the host membrane. This is an uncharacterized protein from Sulfolobus islandicus rod-shaped virus 1 (SIRV-1).